The primary structure comprises 596 residues: Chloride intracellular channel protein 6 (596 aa).

Residues M1–E360 are disordered. A compositionally biased stretch (basic and acidic residues) spans L34–R48. Position 40 is a phosphoserine (S40). The span at G65–G74 shows a compositional bias: gly residues. Positions G83–A98 are enriched in low complexity. Over residues S118–D130 the composition is skewed to polar residues. Positions D148–S160 are enriched in acidic residues. 2 stretches are compositionally biased toward low complexity: residues G197–Q213 and G225–G244. Over residues T246–G290 the composition is skewed to basic and acidic residues. Residue S304 is modified to Phosphoserine. The segment covering E338–N348 has biased composition (basic and acidic residues). The G-site signature appears at C379–S382. A helical membrane pass occupies residues F381–V401. The GST C-terminal domain occupies D425–K596.

This sequence belongs to the chloride channel CLIC family. In terms of assembly, monomer (soluble state). Interacts with dopamine receptors DRD2, DRD3 and DRD4. Post-translationally, phosphorylated.

Its subcellular location is the cytoplasm. The protein localises to the cell membrane. The enzyme catalyses chloride(in) = chloride(out). With respect to regulation, channel activity is redox- and pH-regulated. Inhibited by IAA-94. In the soluble state, catalyzes glutaredoxin-like thiol disulfide exchange reactions with reduced glutathione as electron donor. Can insert into membranes and form voltage-dependent chloride-selective channels. The channel opens upon membrane depolarization at positive voltages and closes at negative membrane voltages. May play a critical role in water-secreting cells, possibly through the regulation of chloride ion transport. The polypeptide is Chloride intracellular channel protein 6 (Clic6) (Mus musculus (Mouse)).